Reading from the N-terminus, the 607-residue chain is Protein PLASTID MOVEMENT IMPAIRED 2 (607 aa).

Coiled coils occupy residues 66–295 (KAKK…NAEL) and 329–445 (MLER…ESRR).

Belongs to the WEB family. Interacts with WEB1. As to expression, ubiquitous but preferentially in chloroplast-containing tissues.

Its subcellular location is the cytoplasm. Its function is as follows. Required for the chloroplast avoidance response under high intensity blue light. This avoidance response consists in the relocation of chloroplasts on the anticlinal side of exposed cells. Acts in association with WEB1 to maintain the velocity of chloroplast photorelocation movement via cp-actin filaments regulation. This Arabidopsis thaliana (Mouse-ear cress) protein is Protein PLASTID MOVEMENT IMPAIRED 2 (PMI2).